The primary structure comprises 660 residues: U-box domain-containing protein 13 (660 aa).

The tract at residues 227 to 252 (DDNGEEQKVGVNSRSNGQTSTAASQK) is disordered. Positions 236-250 (GVNSRSNGQTSTAAS) are enriched in polar residues. A U-box domain is found at 255-329 (VIPDDFRCPI…AQWCEANDIE (75 aa)). ARM repeat units follow at residues 384 to 423 (ADNRVAIAEAGAIPLLVGLLSTPDSRIQEHSVTALLNLSI), 425 to 464 (ENNKGAIVSAGAIPGIVQVLKKGSMEARENAAATLFSLSV), 466 to 505 (DENKVTIGALGAIPPLVVLLNEGTQRGKKDAATALFNLCI), 507 to 546 (QGNKGKAIRAGVIPTLTRLLTEPGSGMVDEALAILAILSS), and 548 to 587 (PEGKAIIGSSDAVPSLVEFIRTGSPRNRENAAAVLVHLCS). Residues 631–660 (AEQQKETAVSQPEEEAEPTHPESTTEAADT) are disordered. Over residues 651 to 660 (PESTTEAADT) the composition is skewed to polar residues.

As to quaternary structure, binds to SD11, SD16, SD17, SD18, SD113, SD129 and SD25. Phosphorylated by SD1-6 and SD1-7.

Its subcellular location is the nucleus. The protein localises to the cytoplasm. It catalyses the reaction S-ubiquitinyl-[E2 ubiquitin-conjugating enzyme]-L-cysteine + [acceptor protein]-L-lysine = [E2 ubiquitin-conjugating enzyme]-L-cysteine + N(6)-ubiquitinyl-[acceptor protein]-L-lysine.. It participates in protein modification; protein ubiquitination. Functionally, functions as an E3 ubiquitin ligase. This Arabidopsis thaliana (Mouse-ear cress) protein is U-box domain-containing protein 13 (PUB13).